Here is a 427-residue protein sequence, read N- to C-terminus: Histidinol dehydrogenase (427 aa).

Tyrosine 127, glutamine 187, and asparagine 210 together coordinate NAD(+). The substrate site is built by serine 233, glutamine 255, and histidine 258. Zn(2+) is bound by residues glutamine 255 and histidine 258. Residues glutamate 323 and histidine 324 each act as proton acceptor in the active site. Substrate is bound by residues histidine 324, aspartate 357, glutamate 411, and histidine 416. Zn(2+) is bound at residue aspartate 357. Histidine 416 is a binding site for Zn(2+).

It belongs to the histidinol dehydrogenase family. The cofactor is Zn(2+).

The enzyme catalyses L-histidinol + 2 NAD(+) + H2O = L-histidine + 2 NADH + 3 H(+). It functions in the pathway amino-acid biosynthesis; L-histidine biosynthesis; L-histidine from 5-phospho-alpha-D-ribose 1-diphosphate: step 9/9. In terms of biological role, catalyzes the sequential NAD-dependent oxidations of L-histidinol to L-histidinaldehyde and then to L-histidine. This is Histidinol dehydrogenase from Streptococcus mutans serotype c (strain ATCC 700610 / UA159).